The sequence spans 380 residues: Queuine tRNA-ribosyltransferase (380 aa).

The active-site Proton acceptor is the D96. Residues 96–100, D150, Q193, and G220 contribute to the substrate site; that span reads DSGGF. Positions 251–257 are RNA binding; it reads GVGAPDS. The active-site Nucleophile is the D270. Positions 275 to 279 are RNA binding; important for wobble base 34 recognition; that stretch reads TRIAR. The Zn(2+) site is built by C308, C310, C313, and H339.

Belongs to the queuine tRNA-ribosyltransferase family. As to quaternary structure, homodimer. Within each dimer, one monomer is responsible for RNA recognition and catalysis, while the other monomer binds to the replacement base PreQ1. The cofactor is Zn(2+).

The enzyme catalyses 7-aminomethyl-7-carbaguanine + guanosine(34) in tRNA = 7-aminomethyl-7-carbaguanosine(34) in tRNA + guanine. It functions in the pathway tRNA modification; tRNA-queuosine biosynthesis. In terms of biological role, catalyzes the base-exchange of a guanine (G) residue with the queuine precursor 7-aminomethyl-7-deazaguanine (PreQ1) at position 34 (anticodon wobble position) in tRNAs with GU(N) anticodons (tRNA-Asp, -Asn, -His and -Tyr). Catalysis occurs through a double-displacement mechanism. The nucleophile active site attacks the C1' of nucleotide 34 to detach the guanine base from the RNA, forming a covalent enzyme-RNA intermediate. The proton acceptor active site deprotonates the incoming PreQ1, allowing a nucleophilic attack on the C1' of the ribose to form the product. After dissociation, two additional enzymatic reactions on the tRNA convert PreQ1 to queuine (Q), resulting in the hypermodified nucleoside queuosine (7-(((4,5-cis-dihydroxy-2-cyclopenten-1-yl)amino)methyl)-7-deazaguanosine). The sequence is that of Queuine tRNA-ribosyltransferase from Streptococcus pneumoniae (strain Taiwan19F-14).